A 207-amino-acid polypeptide reads, in one-letter code: Cilia- and flagella-associated protein 418 (207 aa).

The segment at 1 to 75 (MAEDLDELLD…LINEILEEPN (75 aa)) is required for interaction with FAM161A. Residues 26–52 (MVEQPKGCGGGTHSSDRNQAKAKETLR) are disordered. Residues 39–52 (SSDRNQAKAKETLR) are compositionally biased toward basic and acidic residues.

Interacts (via N-terminus) with FAM161A (via central region); the interaction is direct. In terms of tissue distribution, widely expressed, with highest levels in heart and brain. Also expressed in the retina (at protein level).

The protein localises to the cytoplasm. The protein resides in the photoreceptor inner segment. Its function is as follows. May be involved in photoreceptor outer segment disk morphogenesis. This is Cilia- and flagella-associated protein 418 from Homo sapiens (Human).